The sequence spans 155 residues: Ribosome maturation factor RimP (155 aa).

It belongs to the RimP family.

It is found in the cytoplasm. Its function is as follows. Required for maturation of 30S ribosomal subunits. This chain is Ribosome maturation factor RimP, found in Synechococcus sp. (strain WH7803).